A 152-amino-acid chain; its full sequence is Small ribosomal subunit protein uS13 (152 aa).

Belongs to the universal ribosomal protein uS13 family.

Its subcellular location is the cytoplasm. Located at the top of the head of the 40S subunit, it contacts several helices of the 18S rRNA. In Argopecten irradians (Bay scallop), this protein is Small ribosomal subunit protein uS13 (RPS18).